The following is a 276-amino-acid chain: Hydroxyethylthiazole kinase (276 aa).

ATP is bound by residues Arg-126 and Ser-172. Substrate is bound at residue Gly-199.

Belongs to the Thz kinase family. It depends on Mg(2+) as a cofactor.

It carries out the reaction 5-(2-hydroxyethyl)-4-methylthiazole + ATP = 4-methyl-5-(2-phosphooxyethyl)-thiazole + ADP + H(+). It participates in cofactor biosynthesis; thiamine diphosphate biosynthesis; 4-methyl-5-(2-phosphoethyl)-thiazole from 5-(2-hydroxyethyl)-4-methylthiazole: step 1/1. Functionally, catalyzes the phosphorylation of the hydroxyl group of 4-methyl-5-beta-hydroxyethylthiazole (THZ). The protein is Hydroxyethylthiazole kinase of Burkholderia pseudomallei (strain 1710b).